Reading from the N-terminus, the 97-residue chain is YcgL domain-containing protein Tcr_0238 (97 aa).

The YcgL domain maps to 3–87; sequence LLVSAYKSAK…SEIEKMGDMP (85 aa). The interval 78 to 97 is disordered; the sequence is SEIEKMGDMPPPPEHLDNIF.

This Hydrogenovibrio crunogenus (strain DSM 25203 / XCL-2) (Thiomicrospira crunogena) protein is YcgL domain-containing protein Tcr_0238.